The primary structure comprises 391 residues: Succinate--CoA ligase [ADP-forming] subunit beta (391 aa).

Positions arginine 9–arginine 237 constitute an ATP-grasp domain. ATP is bound by residues lysine 46, glycine 53–glycine 55, alanine 95, and glutamate 100. Mg(2+) is bound by residues asparagine 192 and aspartate 206. Substrate is bound by residues asparagine 257 and glycine 320–threonine 322.

Belongs to the succinate/malate CoA ligase beta subunit family. As to quaternary structure, heterotetramer of two alpha and two beta subunits. It depends on Mg(2+) as a cofactor.

The catalysed reaction is succinate + ATP + CoA = succinyl-CoA + ADP + phosphate. It carries out the reaction GTP + succinate + CoA = succinyl-CoA + GDP + phosphate. It functions in the pathway carbohydrate metabolism; tricarboxylic acid cycle; succinate from succinyl-CoA (ligase route): step 1/1. Its function is as follows. Succinyl-CoA synthetase functions in the citric acid cycle (TCA), coupling the hydrolysis of succinyl-CoA to the synthesis of either ATP or GTP and thus represents the only step of substrate-level phosphorylation in the TCA. The beta subunit provides nucleotide specificity of the enzyme and binds the substrate succinate, while the binding sites for coenzyme A and phosphate are found in the alpha subunit. The protein is Succinate--CoA ligase [ADP-forming] subunit beta of Cutibacterium acnes (strain DSM 16379 / KPA171202) (Propionibacterium acnes).